The primary structure comprises 54 residues: Small ribosomal subunit protein uS14 (54 aa).

Zn(2+) contacts are provided by Cys19, Cys22, Cys37, and Cys40.

The protein belongs to the universal ribosomal protein uS14 family. Zinc-binding uS14 subfamily. As to quaternary structure, part of the 30S ribosomal subunit. Requires Zn(2+) as cofactor.

Functionally, binds 16S rRNA, required for the assembly of 30S particles. The chain is Small ribosomal subunit protein uS14 from Pyrobaculum aerophilum (strain ATCC 51768 / DSM 7523 / JCM 9630 / CIP 104966 / NBRC 100827 / IM2).